The primary structure comprises 175 residues: General odorant-binding protein 84a (175 aa).

The first 24 residues, 1 to 24 (MYSALVRACAVIAFLILSPNCARA), serve as a signal peptide directing secretion. Cystine bridges form between cysteine 103-cysteine 151 and cysteine 140-cysteine 160.

In terms of tissue distribution, present only in a small number of hairs scattered over the surface of the funiculus.

It localises to the secreted. The polypeptide is General odorant-binding protein 84a (Obp84a) (Drosophila melanogaster (Fruit fly)).